We begin with the raw amino-acid sequence, 561 residues long: Putative transport protein ASA_2308 (561 aa).

The next 5 helical transmembrane spans lie at 8-28 (LLHQ…LLLG), 37-57 (IGNT…GFEF), 66-86 (FMLF…SVFL), 90-110 (IHYI…TVGL), and 161-181 (NMGI…MLVV). 2 consecutive RCK C-terminal domains span residues 206 to 291 (SDNE…NYRN) and 293 to 376 (KEVF…KIGF). 5 helical membrane passes run 386–406 (LVAF…SLVF), 409–429 (LEFG…MGYL), 450–470 (LGLA…ILDH), 476–496 (AVVL…GYLF), and 541–561 (TYAV…GFWF).

Belongs to the AAE transporter (TC 2.A.81) family. YbjL subfamily.

The protein resides in the cell membrane. The chain is Putative transport protein ASA_2308 from Aeromonas salmonicida (strain A449).